Reading from the N-terminus, the 1032-residue chain is Connector enhancer of kinase suppressor of ras 2 (1032 aa).

The SAM domain occupies 11 to 76 (WSPSQVVDWM…LEAVDLLCAL (66 aa)). At serine 12 the chain carries Phosphoserine. The 95-residue stretch at 84–178 (NLKTLSHKLN…TIVQQDCTVY (95 aa)) folds into the CRIC domain. A PDZ domain is found at 215–297 (VIQLANIKPS…GVILTLKKRP (83 aa)). Positions 302–515 (TSAPALLKNM…PAHYSLLPSL (214 aa)) constitute a DUF1170 domain. Low complexity predominate over residues 324-340 (RSPTSSVATPSSTISTP). The tract at residues 324–349 (RSPTSSVATPSSTISTPTKRDSSALQ) is disordered. Residues serine 338 and serine 390 each carry the phosphoserine modification. 2 disordered regions span residues 480-509 (EEYM…PAHY) and 538-558 (FQQS…ISGK). A compositionally biased stretch (basic residues) spans 545–558 (HKSKKKNKGAISGK). The PH domain occupies 570–669 (RGDCEGWLWK…WLNRINMLTA (100 aa)). Residues 682-766 (DYWSESDKEE…PIRKTASQRR (85 aa)) are disordered. Position 683 is a phosphotyrosine (tyrosine 683). Residues 683–693 (YWSESDKEEAD) show a composition bias toward acidic residues. Residues serine 685 and serine 687 each carry the phosphoserine modification. Residues 701–714 (DSPPPPYDTYPRPP) show a composition bias toward pro residues. Residues 730 to 740 (LSSTETSQSQS) show a composition bias toward low complexity. Phosphoserine occurs at positions 756 and 767. The tract at residues 864-900 (ACDPQDDIQPPEVEEEEEEEEEEAAGENVGEKNENRE) is disordered. Positions 874-917 (PEVEEEEEEEEEEAAGENVGEKNENREEKLGDSLQDLYRALEEA) form a coiled coil. A compositionally biased stretch (acidic residues) spans 875-888 (EVEEEEEEEEEEAA). Position 906 is a phosphoserine (serine 906).

This sequence belongs to the CNKSR family. As to quaternary structure, interacts with RAF1, RAB2L and RAL GTPase proteins. Phosphorylated on tyrosine.

Its subcellular location is the cytoplasm. The protein resides in the membrane. In terms of biological role, may function as an adapter protein or regulator of Ras signaling pathways. The chain is Connector enhancer of kinase suppressor of ras 2 (Cnksr2) from Mus musculus (Mouse).